We begin with the raw amino-acid sequence, 355 residues long: MVNLGKDTYPVYIGSNLLEISNIFFPIESNTQVAIITNDVVFKIWNKKITYYLHKLGAQVKNVIISDGEIYKNIDTVEIILSTLLKYSYCRDAVLIALGGGVIGDITGFVASIYQRGIKFVQIPTTLLAQVDASIGGKTSVNHVLGKNMIGSFWQPSSVIINFDFLNTLPRRQLISGIAEIVKYAVSFDVNFFNWLEENLERVLKLDYSALSYCINRCCEIKISIVEKDEKEIHDRMLLNLGHTYGHAIETFLGYGTWLHGEAVSVGIVMASKTSELLGFMKDNDITRIISLLQRVGLPISGPKNMSFESYISNFKRDKKVISGKLRMVLPVFIGNVKIFSNVHENILMSVIKNC.

NAD(+) contacts are provided by residues 67-72 (DGEIYK), 101-105 (GVIGD), 125-126 (TT), K138, K147, and 165-168 (FLNT). Zn(2+) is bound by residues E180, H243, and H260.

It belongs to the sugar phosphate cyclases superfamily. Dehydroquinate synthase family. The cofactor is NAD(+). Requires Co(2+) as cofactor. Zn(2+) is required as a cofactor.

The protein localises to the cytoplasm. The catalysed reaction is 7-phospho-2-dehydro-3-deoxy-D-arabino-heptonate = 3-dehydroquinate + phosphate. Its pathway is metabolic intermediate biosynthesis; chorismate biosynthesis; chorismate from D-erythrose 4-phosphate and phosphoenolpyruvate: step 2/7. In terms of biological role, catalyzes the conversion of 3-deoxy-D-arabino-heptulosonate 7-phosphate (DAHP) to dehydroquinate (DHQ). The sequence is that of 3-dehydroquinate synthase from Buchnera aphidicola subsp. Baizongia pistaciae (strain Bp).